We begin with the raw amino-acid sequence, 534 residues long: MAIKLIALVITLCVASWDVAQGRSLRFSTTPLNRYSFPPHFDFGVASSAYQYEGAVEEGGRSLSIWDNFTHAFPERTNMDNGDVAVDFYHRYKEDIKLIKEMNMDSFRFSLSWSRILPSGKLSDGVNKEGVQFYKNLIDELIENGIKPFVTIYHWDIPQALDDEYGSFLSPRIIDDFRNYARFCFQEFGDKVSMWTTFNEPYVYSVSGYDAGNKAMGRCSKWVNSLCIAGDSGTEPYLVSHHLLLAHAAAVEEFRKCDKISQDSKIGIVLSPYWFEPYDSASNADKEAVERALAFNIGWHLSPLVFGDYPETIKISAGNRLPSFTKEQSMMVKNSFDFIGVNYYTARFVAHDLNVDISRPRFMTDQHLQYKLTNRTGDTISLESDGTKILWSYPEGLRKILNYIKNKYNNPTIYITENGFDDYENGTVTREEILEDTKRIEYHQKHLQELQKAITEDGCDVKGYFTWSLLDNFEWEHGYAVRFGLYYVDYKNGLQRHAKHSAMWFKHFLERSGKPMPMDLFKSVKRWWSTLQMI.

An N-terminal signal peptide occupies residues 1 to 22 (MAIKLIALVITLCVASWDVAQG). Glutamine 51 is a binding site for a beta-D-glucoside. Asparagine 68 is a glycosylation site (N-linked (GlcNAc...) asparagine). Residues histidine 154 and 199–200 (NE) contribute to the a beta-D-glucoside site. The Proton donor role is filled by glutamate 200. Cysteine 219 and cysteine 227 are joined by a disulfide. Tyrosine 344 lines the a beta-D-glucoside pocket. Residue asparagine 374 is glycosylated (N-linked (GlcNAc...) asparagine). A beta-D-glucoside is bound at residue glutamate 417. Glutamate 417 acts as the Nucleophile in catalysis. Asparagine 425 carries N-linked (GlcNAc...) asparagine glycosylation. Residues tryptophan 467, 474-475 (EW), and phenylalanine 483 each bind a beta-D-glucoside.

This sequence belongs to the glycosyl hydrolase 1 family.

It catalyses the reaction Hydrolysis of terminal, non-reducing beta-D-glucosyl residues with release of beta-D-glucose.. This is Beta-glucosidase 31 from Arabidopsis thaliana (Mouse-ear cress).